The chain runs to 1848 residues: Cellulose-binding protein A (1848 aa).

The first 28 residues, Met-1–Ala-28, serve as a signal peptide directing secretion. Positions Ala-29–Gly-190 constitute a CBM3 domain. Cohesin domains are found at residues Val-291–Ile-428, Met-435–Ile-570, Val-668–Ile-801, Val-810–Ile-943, Val-952–Ile-1085, Val-1094–Ile-1227, Val-1236–Ile-1369, Val-1377–Ile-1511, and Phe-1709–Val-1847.

The N-terminus is blocked. In terms of processing, glycosylated.

It is found in the secreted. In terms of biological role, binds to cellulose fibers and coordinates cellulase enzymes. This is Cellulose-binding protein A (cbpA) from Clostridium cellulovorans.